We begin with the raw amino-acid sequence, 355 residues long: 3-dehydroquinate synthase (355 aa).

Residues 106-110 (GVVGD), 130-131 (TS), K143, and K152 contribute to the NAD(+) site. Zn(2+) contacts are provided by E185, H246, and H262.

This sequence belongs to the sugar phosphate cyclases superfamily. Dehydroquinate synthase family. The cofactor is Co(2+). Requires Zn(2+) as cofactor. NAD(+) serves as cofactor.

It localises to the cytoplasm. The enzyme catalyses 7-phospho-2-dehydro-3-deoxy-D-arabino-heptonate = 3-dehydroquinate + phosphate. It functions in the pathway metabolic intermediate biosynthesis; chorismate biosynthesis; chorismate from D-erythrose 4-phosphate and phosphoenolpyruvate: step 2/7. Its function is as follows. Catalyzes the conversion of 3-deoxy-D-arabino-heptulosonate 7-phosphate (DAHP) to dehydroquinate (DHQ). This chain is 3-dehydroquinate synthase, found in Latilactobacillus sakei subsp. sakei (strain 23K) (Lactobacillus sakei subsp. sakei).